The sequence spans 273 residues: Large ribosomal subunit protein uL2 (273 aa).

Disordered regions lie at residues 28 to 53 (KPFA…TTRH) and 221 to 273 (RGTA…RRSK). The span at 39 to 48 (KSGGRNNNGR) shows a compositional bias: low complexity.

This sequence belongs to the universal ribosomal protein uL2 family. In terms of assembly, part of the 50S ribosomal subunit. Forms a bridge to the 30S subunit in the 70S ribosome.

Its function is as follows. One of the primary rRNA binding proteins. Required for association of the 30S and 50S subunits to form the 70S ribosome, for tRNA binding and peptide bond formation. It has been suggested to have peptidyltransferase activity; this is somewhat controversial. Makes several contacts with the 16S rRNA in the 70S ribosome. This Enterobacter sp. (strain 638) protein is Large ribosomal subunit protein uL2.